A 90-amino-acid chain; its full sequence is Probable Fe(2+)-trafficking protein (90 aa).

This sequence belongs to the Fe(2+)-trafficking protein family.

Could be a mediator in iron transactions between iron acquisition and iron-requiring processes, such as synthesis and/or repair of Fe-S clusters in biosynthetic enzymes. The chain is Probable Fe(2+)-trafficking protein from Pseudomonas fluorescens (strain Pf0-1).